A 102-amino-acid chain; its full sequence is NADH-quinone oxidoreductase subunit K (102 aa).

3 helical membrane passes run 5–25 (LEHYLAVAAILFVTGIFGIFV), 31–51 (IVILMSIELMLLAVNINMVAF), and 66–86 (FVLTVAAAEAAIGLAILVVFF).

Belongs to the complex I subunit 4L family. NDH-1 is composed of 14 different subunits. Subunits NuoA, H, J, K, L, M, N constitute the membrane sector of the complex.

It is found in the cellular chromatophore membrane. The enzyme catalyses a quinone + NADH + 5 H(+)(in) = a quinol + NAD(+) + 4 H(+)(out). Functionally, NDH-1 shuttles electrons from NADH, via FMN and iron-sulfur (Fe-S) centers, to quinones in the respiratory chain. The immediate electron acceptor for the enzyme in this species is believed to be ubiquinone. Couples the redox reaction to proton translocation (for every two electrons transferred, four hydrogen ions are translocated across the cytoplasmic membrane), and thus conserves the redox energy in a proton gradient. In Rhodobacter capsulatus (Rhodopseudomonas capsulata), this protein is NADH-quinone oxidoreductase subunit K.